A 111-amino-acid chain; its full sequence is Flagellar hook-basal body complex protein FliE (111 aa).

The protein belongs to the FliE family.

The protein localises to the bacterial flagellum basal body. This Brucella ovis (strain ATCC 25840 / 63/290 / NCTC 10512) protein is Flagellar hook-basal body complex protein FliE.